A 33-amino-acid polypeptide reads, in one-letter code: Phosphoglycerate kinase (33 aa).

An AMP-binding site is contributed by Lys13. An ATP-binding site is contributed by Lys13.

It belongs to the phosphoglycerate kinase family. Monomer. Mg(2+) serves as cofactor.

The enzyme catalyses (2R)-3-phosphoglycerate + ATP = (2R)-3-phospho-glyceroyl phosphate + ADP. In Pseudotsuga menziesii (Douglas-fir), this protein is Phosphoglycerate kinase.